The primary structure comprises 294 residues: 4-hydroxy-tetrahydrodipicolinate synthase (294 aa).

Thr-47 contacts pyruvate. Tyr-135 serves as the catalytic Proton donor/acceptor. The Schiff-base intermediate with substrate role is filled by Lys-163. A pyruvate-binding site is contributed by Val-205.

This sequence belongs to the DapA family. In terms of assembly, homotetramer; dimer of dimers.

The protein resides in the cytoplasm. The catalysed reaction is L-aspartate 4-semialdehyde + pyruvate = (2S,4S)-4-hydroxy-2,3,4,5-tetrahydrodipicolinate + H2O + H(+). Its pathway is amino-acid biosynthesis; L-lysine biosynthesis via DAP pathway; (S)-tetrahydrodipicolinate from L-aspartate: step 3/4. In terms of biological role, catalyzes the condensation of (S)-aspartate-beta-semialdehyde [(S)-ASA] and pyruvate to 4-hydroxy-tetrahydrodipicolinate (HTPA). The sequence is that of 4-hydroxy-tetrahydrodipicolinate synthase from Rickettsia bellii (strain OSU 85-389).